The chain runs to 658 residues: MELKNLFPIFWFVLVGFAVVSAQECGKTGFFVPQSRYETNRGLLLSSLPSNVSARGGFYNSSIGQGPDRVYALGMCIEGAEPDVCSDCIEYASNLLLDTCLNQTEGLAWPEKRILCMVRYSNSSFFGSLKAEPHFYIHNVDDITSNLTEFDQVWEELARRMIASTTSPSSKRKYYAADVAALTAFQIIYALMQCTPDLSLEDCHICLRQSVGDYETCCNGKQGGIVYRASCVFRWELFPFSEAFSRISLAPPPQSPAFPTLPAVTNTATKKGSITISIGIVWAIIIPTVIVVFLVLLALGFVVYRRRKSYQGSSTDITITHSLQFDFKAIEDATNKFSESNIIGRGGFGEVFMGVLNGTEVAIKRLSKASRQGAREFKNEVVVVAKLHHRNLVKLLGFCLEGEEKILVYEFVPNKSLDYFLFDPTKQGQLDWTKRYNIIRGITRGILYLHQDSRLTIIHRDLKASNILLDADMNPKIADFGMARIFGIDQSGANTKKIAGTRGYMPPEYVRQGQFSTRSDVYSFGVLVLEIICGRNNRFIHQSDTTVENLVTYAWRLWRNDSPLELVDPTISENCETEEVTRCIHIALLCVQHNPTDRPSLSTINMMLINNSYVLPDPQQPGFFFPIISNQERDGLDSMNRSNPQTINDVTITDFEPR.

Residues 1–22 form the signal peptide; sequence MELKNLFPIFWFVLVGFAVVSA. 2 consecutive Gnk2-homologous domains span residues 23-125 and 131-240; these read QECG…NSSF and AEPH…LFPF. Topologically, residues 23 to 277 are extracellular; sequence QECGKTGFFV…ATKKGSITIS (255 aa). Asn-51, Asn-60, Asn-102, Asn-122, and Asn-146 each carry an N-linked (GlcNAc...) asparagine glycan. The chain crosses the membrane as a helical span at residues 278–298; it reads IGIVWAIIIPTVIVVFLVLLA. The Cytoplasmic portion of the chain corresponds to 299 to 658; that stretch reads LGFVVYRRRK…DVTITDFEPR (360 aa). The 278-residue stretch at 337–614 folds into the Protein kinase domain; sequence FSESNIIGRG…NMMLINNSYV (278 aa). ATP contacts are provided by residues 343-351 and Lys-364; that span reads IGRGGFGEV. A Phosphotyrosine modification is found at Tyr-409. Residue Asp-461 is the Proton acceptor of the active site. Residue Ser-465 is modified to Phosphoserine. Thr-501 bears the Phosphothreonine mark. Tyr-509 is subject to Phosphotyrosine.

The protein belongs to the protein kinase superfamily. Ser/Thr protein kinase family. CRK subfamily.

The protein localises to the membrane. It carries out the reaction L-seryl-[protein] + ATP = O-phospho-L-seryl-[protein] + ADP + H(+). It catalyses the reaction L-threonyl-[protein] + ATP = O-phospho-L-threonyl-[protein] + ADP + H(+). This chain is Cysteine-rich receptor-like protein kinase 14 (CRK14), found in Arabidopsis thaliana (Mouse-ear cress).